The primary structure comprises 817 residues: DNA-directed RNA polymerase subunit beta'' (817 aa).

The Zn(2+) site is built by Cys219, Cys291, Cys298, and Cys301.

This sequence belongs to the RNA polymerase beta' chain family. RpoC2 subfamily. In terms of assembly, in plastids the minimal PEP RNA polymerase catalytic core is composed of four subunits: alpha, beta, beta', and beta''. When a (nuclear-encoded) sigma factor is associated with the core the holoenzyme is formed, which can initiate transcription. The cofactor is Zn(2+).

It is found in the plastid. The catalysed reaction is RNA(n) + a ribonucleoside 5'-triphosphate = RNA(n+1) + diphosphate. In terms of biological role, DNA-dependent RNA polymerase catalyzes the transcription of DNA into RNA using the four ribonucleoside triphosphates as substrates. The protein is DNA-directed RNA polymerase subunit beta'' (rpoC2) of Euglena longa (Euglenophycean alga).